We begin with the raw amino-acid sequence, 395 residues long: Multidrug resistance protein MdtL (395 aa).

Residues 1–3 (MKR) lie on the Cytoplasmic side of the membrane. Residues 4–24 (FLLCSFALVLLYPAGIDMYLV) traverse the membrane as a helical segment. Residues 25–41 (GLPRIAADLNASEAQLH) are Periplasmic-facing. A helical membrane pass occupies residues 42–62 (IAFSVYLAGMATAMLFAGKIA). Residues 63 to 68 (DQSGRK) lie on the Cytoplasmic side of the membrane. Residues 69–89 (PVAIVGAIVFMMASLLCSRAS) form a helical membrane-spanning segment. The Periplasmic portion of the chain corresponds to 90 to 92 (EGS). A helical transmembrane segment spans residues 93–113 (LFLSGRFLQGVGAGGCYVVAF). Residues 114 to 130 (AILRDTLDEHRRAKVLS) lie on the Cytoplasmic side of the membrane. The chain crosses the membrane as a helical span at residues 131–151 (LLNGITCIVPVLAPVMGHLIM). The Periplasmic portion of the chain corresponds to 152–157 (LRFPWQ). A helical transmembrane segment spans residues 158–178 (SLFYTMSTMGIMVGLLSLFIL). Residues 179–216 (RETRPARLAPRDLSPSSSAAESLVNRFFVSRLAITTLS) lie on the Cytoplasmic side of the membrane. Residues 217 to 237 (VSVILTFVNASPVLLMEVMGF) form a helical membrane-spanning segment. Over 238–246 (SRGDYAITM) the chain is Periplasmic. The chain crosses the membrane as a helical span at residues 247 to 267 (ALTAGVSMVVSFSTPFALGLF). Over 268–270 (KPR) the chain is Cytoplasmic. The helical transmembrane segment at 271–291 (TLMLVSQGLFLTAGVTLSLAH) threads the bilayer. Over 292 to 294 (TNT) the chain is Periplasmic. A helical membrane pass occupies residues 295–315 (VTLFGLTLICAGFSVGFGVAM). Over 316-332 (SQALGPFSLRAGVASST) the chain is Cytoplasmic. A helical membrane pass occupies residues 333 to 353 (LGIAQVCGSSLWIWLAAILGI). The Periplasmic segment spans residues 354-357 (SAMN). A helical transmembrane segment spans residues 358–378 (MLIGILIGCSIVSILLIFSVA). Topologically, residues 379–395 (PNRSVAEHEEIPYQSRS) are cytoplasmic.

It belongs to the major facilitator superfamily. DHA1 family. MdtL (TC 2.A.1.2.22) subfamily.

Its subcellular location is the cell inner membrane. The protein is Multidrug resistance protein MdtL (mdtL) of Salmonella typhi.